Here is a 522-residue protein sequence, read N- to C-terminus: MAAVVAATRWWQLLLVLSAAGMGASGAPQPPNILLLLMDDMGWGDLGVYGEPSRETPNLDRMAAEGLLFPNFYSANPLCSPSRAALLTGRLPIRNGFYTTNAHARNAYTPQEIVGGIPDSEQLLPELLKKAGYVSKIVGKWHLGHRPQFHPLKHGFDEWFGSPNCHFGPYDNKARPNIPVYRDWEMVGRYYEEFPINLKTGEANLTQIYLQEALDFIKRQARHHPFFLYWAVDATHAPVYASKPFLGTSQRGRYGDAVREIDDSIGKILELLQDLHVADNTFVFFTSDNGAALISAPEQGGSNGPFLCGKQTTFEGGMREPALAWWPGHVTAGQVSHQLGSIMDLFTTSLALAGLTPPSDRAIDGLNLLPTLLQGRLMDRPIFYYRGDTLMAATLGQHKAHFWTWTNSWENFRQGIDFCPGQNVSGVTTHNLEDHTKLPLIFHLGRDPGERFPLSFASAEYQEALSRITSVVQQHQEALVPAQPQLNVCNWAVMNWAPPGCEKLGKCLTPPESIPKKCLWSH.

Positions 1 to 26 (MAAVVAATRWWQLLLVLSAAGMGASG) are cleaved as a signal peptide. The tract at residues 27 to 379 (APQPPNILLL…PTLLQGRLMD (353 aa)) is catalytic domain. The Ca(2+) site is built by Asp39, Asp40, and Cys79. Residue Cys79 is the Nucleophile of the active site. Residue Cys79 is modified to 3-oxoalanine (Cys). His142 is an active-site residue. An N-linked (GlcNAc...) asparagine glycan is attached at Asn204. Ca(2+)-binding residues include Asp288 and Asn289. The cysteines at positions 308 and 419 are disulfide-linked. Asn423 carries an N-linked (GlcNAc...) asparagine glycan. Intrachain disulfides connect Cys489–Cys518 and Cys501–Cys507.

Belongs to the sulfatase family. In terms of assembly, homodimer. Requires Ca(2+) as cofactor. In terms of processing, the conversion to 3-oxoalanine (also known as C-formylglycine, FGly), of a serine or cysteine residue in prokaryotes and of a cysteine residue in eukaryotes, is critical for catalytic activity.

It is found in the lysosome. The enzyme catalyses Hydrolysis of the 6-sulfate groups of the N-acetyl-D-galactosamine 6-sulfate units of chondroitin sulfate and of the D-galactose 6-sulfate units of keratan sulfate.. The protein is N-acetylgalactosamine-6-sulfatase (GALNS) of Homo sapiens (Human).